Reading from the N-terminus, the 185-residue chain is Jasmonate-induced protein homolog (185 aa).

This sequence belongs to the jasmonate-induced protein family.

This is Jasmonate-induced protein homolog from Atriplex canescens (Fourwing saltbush).